We begin with the raw amino-acid sequence, 198 residues long: Probable opine utilization operon repressor (198 aa).

It participates in opine metabolism; mannopine biosynthesis [regulation]. Functionally, possible repressor for genes for mannityl-opine utilization and / or plasmid conjugative transfer. This Rhizobium rhizogenes (Agrobacterium rhizogenes) protein is Probable opine utilization operon repressor (opnR).